A 324-amino-acid polypeptide reads, in one-letter code: Fructose-1,6-bisphosphatase class 1 (324 aa).

Mg(2+)-binding residues include Glu-88, Asp-107, Leu-109, and Asp-110. Residues 110–113 (DGSS), Asn-199, and Lys-265 each bind substrate. Glu-271 contacts Mg(2+).

Belongs to the FBPase class 1 family. Homotetramer. Mg(2+) is required as a cofactor.

The protein localises to the cytoplasm. The catalysed reaction is beta-D-fructose 1,6-bisphosphate + H2O = beta-D-fructose 6-phosphate + phosphate. Its pathway is carbohydrate biosynthesis; gluconeogenesis. The sequence is that of Fructose-1,6-bisphosphatase class 1 from Neisseria meningitidis serogroup C (strain 053442).